The chain runs to 205 residues: Outer-membrane lipoprotein LolB (205 aa).

A signal peptide spans 1-17 (MFLRHVIVFSFIALLAG). C18 carries N-palmitoyl cysteine lipidation. C18 carries the S-diacylglycerol cysteine lipid modification.

It belongs to the LolB family. Monomer.

The protein localises to the cell outer membrane. Its function is as follows. Plays a critical role in the incorporation of lipoproteins in the outer membrane after they are released by the LolA protein. The polypeptide is Outer-membrane lipoprotein LolB (Pseudomonas fluorescens (strain Pf0-1)).